The sequence spans 415 residues: GPI mannosyltransferase 1 (415 aa).

Transmembrane regions (helical) follow at residues P8 to W28, F82 to A102, T134 to L154, I158 to Y178, L222 to L242, F284 to L304, S329 to M349, L354 to Y374, and G387 to I407.

It belongs to the PIGM family.

It is found in the endoplasmic reticulum membrane. The protein operates within glycolipid biosynthesis; glycosylphosphatidylinositol-anchor biosynthesis. In terms of biological role, mannosyltransferase involved in glycosylphosphatidylinositol-anchor biosynthesis. Transfers the first alpha-1,4-mannose to GlcN-acyl-PI during GPI precursor assembly. Required for cell wall integrity. This chain is GPI mannosyltransferase 1 (gpi14), found in Aspergillus oryzae (strain ATCC 42149 / RIB 40) (Yellow koji mold).